A 319-amino-acid chain; its full sequence is Ribosomal RNA large subunit methyltransferase F (319 aa).

The disordered stretch occupies residues 1-25; that stretch reads MAPFFSAMTSKKQSQGLPKGPHPDN. A compositionally biased stretch (polar residues) spans 7–16; that stretch reads AMTSKKQSQG.

It belongs to the methyltransferase superfamily. METTL16/RlmF family.

It localises to the cytoplasm. The enzyme catalyses adenosine(1618) in 23S rRNA + S-adenosyl-L-methionine = N(6)-methyladenosine(1618) in 23S rRNA + S-adenosyl-L-homocysteine + H(+). Functionally, specifically methylates the adenine in position 1618 of 23S rRNA. This is Ribosomal RNA large subunit methyltransferase F from Shewanella amazonensis (strain ATCC BAA-1098 / SB2B).